We begin with the raw amino-acid sequence, 429 residues long: Xaa-Pro dipeptidase (429 aa).

The Mn(2+) site is built by aspartate 241, aspartate 252, histidine 334, glutamate 372, and glutamate 411.

Belongs to the peptidase M24B family. Bacterial-type prolidase subfamily. Requires Mn(2+) as cofactor.

The enzyme catalyses Xaa-L-Pro dipeptide + H2O = an L-alpha-amino acid + L-proline. Splits dipeptides with a prolyl residue in the C-terminal position. The chain is Xaa-Pro dipeptidase from Marinobacter nauticus (strain ATCC 700491 / DSM 11845 / VT8) (Marinobacter aquaeolei).